Consider the following 681-residue polypeptide: uncharacterized protein (681 aa).

The protein in the N-terminal section; belongs to the purine/pyrimidine phosphoribosyltransferase family.

This is an uncharacterized protein from Mycobacterium tuberculosis (strain CDC 1551 / Oshkosh).